We begin with the raw amino-acid sequence, 137 residues long: Protein CTLA-2-alpha (137 aa).

A signal peptide spans 1 to 27; that stretch reads MMVSICEQKLQHFSAVFLLILCLGMMS. 2 tandem repeats follow at residues 39–41 and 42–44. The segment at 39–44 is 2 X 3 AA tandem repeats of E-W-K; the sequence is EWKEWK. The tract at residues 114-137 is disordered; sequence APDLPEYEDLGKNSYLTPGRAQPE.

To the propeptide regions of cysteine proteases.

The protein localises to the secreted. Not known, expressed in activated T-cell. The chain is Protein CTLA-2-alpha (Ctla2a) from Mus musculus (Mouse).